The sequence spans 765 residues: Complement factor B (765 aa).

The N-terminal stretch at 1-25 (MGSNRCPRLGLVPLILGLLSGGVSM) is a signal peptide. Sushi domains lie at 35–100 (SPCS…ECKA), 101–160 (IRCP…ICDD), and 163–220 (GYCP…SCQD). Disulfide bonds link C37–C76, C62–C98, C103–C145, C131–C158, C165–C205, and C191–C218. N-linked (GlcNAc...) asparagine glycans are attached at residues N122 and N142. The VWFA domain occupies 270–469 (NIYLVLDGSD…NLEDVFFQML (200 aa)). Mg(2+) contacts are provided by S278 and S280. An N-linked (GlcNAc...) asparagine glycan is attached at N285. A Mg(2+)-binding site is contributed by T353. N-linked (GlcNAc...) asparagine glycosylation occurs at N378. The 282-residue stretch at 477-758 (LCGMVWEHKD…VLPWLKEKLK (282 aa)) folds into the Peptidase S1 domain. 5 disulfides stabilise this stretch: C478–C596, C511–C527, C599–C615, C660–C686, and C699–C729. Active-site charge relay system residues include H526 and D576. S703 serves as the catalytic Charge relay system.

It belongs to the peptidase S1 family. In terms of assembly, monomer. Interacts with complement C3b; this interaction is dependent on the presence of Mg(2+). As to quaternary structure, catalytic component of the C3 convertase of the alternative complement pathway, also named C3bBb, composed of complement factor B Bb and complement C3b. Catalytic component of the C5 convertase of the alternative complement pathway, also named C3bBb3b, composed of complement factor B Bb and additional molecules of complement C3b. Interacts to CFP; this interaction contributes to the stabilization of the active C3-convertase enzyme complex. Mg(2+) serves as cofactor. Requires Mn(2+) as cofactor. Post-translationally, cleaved by CFD following activation of the alternative complement system, generating Ba and Bb chains. Cleavage and activation takes place when CFB is already associated with complement C3b.

Its subcellular location is the secreted. It is found in the cell surface. The enzyme catalyses Cleavage of Arg-|-Ser bond in complement component C3 alpha-chain to yield C3a and C3b, and Arg-|-Xaa bond in complement component C5 alpha-chain to yield C5a and C5b.. Precursor of the catalytic component of the C3 and C5 convertase complexes of the alternative pathway of the complement system, a cascade of proteins that leads to phagocytosis and breakdown of pathogens and signaling that strengthens the adaptive immune system. The alternative complement pathway acts as an amplification loop that enhances other complement pathways (classical, lectin and GZMK) by promoting formation of additional C3 and C5 convertases. CFB is cleaved and activated by CFD to generate Ba and Bb chains; Bb chain constituting the catalytic component of the C3 and C5 convertases. Functionally, serine protease component of the complement C3 and C5 convertase complexes of the alternative complement pathway. Following cleavage and activation by factor D (CFD), forms the C3 convertase together with complement C3b. As part of the C3 convertase, cleaves and activates C3 into C3a anaphylatoxin and C3b opsonin, the next components of the complement pathways. When an additional complement C3b molecule binds to the C3 convertase, forms the C5 convertase, which cleaves and activates C5 into C5a anaphylatoxin and C5b component of the membrane attack complex. Its function is as follows. Involved in proliferation and differentiation of preactivated B-lymphocytes, rapid spreading of peripheral blood monocytes, stimulation of lymphocyte blastogenesis and lysis of erythrocytes. This is Complement factor B (CFB) from Sus scrofa (Pig).